Reading from the N-terminus, the 638-residue chain is 1-deoxy-D-xylulose-5-phosphate synthase (638 aa).

Thiamine diphosphate contacts are provided by residues H71 and 112-114 (SHA). D144 provides a ligand contact to Mg(2+). Residues 145–146 (GA), N173, Y284, and E365 each bind thiamine diphosphate. N173 lines the Mg(2+) pocket.

The protein belongs to the transketolase family. DXPS subfamily. In terms of assembly, homodimer. The cofactor is Mg(2+). Thiamine diphosphate is required as a cofactor.

The catalysed reaction is D-glyceraldehyde 3-phosphate + pyruvate + H(+) = 1-deoxy-D-xylulose 5-phosphate + CO2. The protein operates within metabolic intermediate biosynthesis; 1-deoxy-D-xylulose 5-phosphate biosynthesis; 1-deoxy-D-xylulose 5-phosphate from D-glyceraldehyde 3-phosphate and pyruvate: step 1/1. Functionally, catalyzes the acyloin condensation reaction between C atoms 2 and 3 of pyruvate and glyceraldehyde 3-phosphate to yield 1-deoxy-D-xylulose-5-phosphate (DXP). This chain is 1-deoxy-D-xylulose-5-phosphate synthase, found in Mycobacterium sp. (strain KMS).